A 336-amino-acid chain; its full sequence is Effector SCP41 (336 aa).

Residues 1–19 (MRTETASLLLLAALSVAEE) form the signal peptide. Disordered regions lie at residues 59–99 (LFSP…STNN) and 189–230 (PVGN…GQKG). Over residues 63 to 74 (QQQQQQQQQQQQ) the composition is skewed to low complexity.

In terms of assembly, interacts with A.thaliana CBP60G; the interaction is direct. Interacts with A.thaliana SARD1. Interacts with G.hirsutum CBP60B.

It is found in the secreted. The protein localises to the host nucleus. Its function is as follows. Effector that binds transcription regulators in the host plant to suppress the host's innate immune response. Inhibits the host plant transcription regulators CBP60G and SARD1. This Verticillium dahliae (strain VdLs.17 / ATCC MYA-4575 / FGSC 10137) (Verticillium wilt) protein is Effector SCP41.